The chain runs to 87 residues: Small ribosomal subunit protein bS16 (87 aa).

It belongs to the bacterial ribosomal protein bS16 family.

This Ehrlichia ruminantium (strain Welgevonden) protein is Small ribosomal subunit protein bS16.